A 158-amino-acid chain; its full sequence is uncharacterized protein (158 aa).

The protein belongs to the SixA phosphatase family.

This is an uncharacterized protein from Mycobacterium tuberculosis (strain CDC 1551 / Oshkosh).